A 279-amino-acid polypeptide reads, in one-letter code: Tumor necrosis factor ligand superfamily member 6 (279 aa).

Residues 1–78 (MQQPMNYPCP…PLKKKDHNTN (78 aa)) are Cytoplasmic-facing. Positions 30 to 70 (FPCPSCGPRGPDQRRPPPPPPPVSPLPPPSQPLPLPPLTPL) are disordered. The span at 45–68 (PPPPPPPVSPLPPPSQPLPLPPLT) shows a compositional bias: pro residues. A helical; Signal-anchor for type II membrane protein membrane pass occupies residues 79-100 (LWLPVVFFMVLVALVGMGLGMY). Residues 101-279 (QLFHLQKELA…SKTFFGLYKL (179 aa)) are Extracellular-facing. The N-linked (GlcNAc...) asparagine glycan is linked to Asn-117. A compositionally biased stretch (polar residues) spans 126 to 135 (EKQIANPSTP). A disordered region spans residues 126–150 (EKQIANPSTPSEKKEPRSVAHLTGN). The THD domain occupies 143-279 (SVAHLTGNPH…SKTFFGLYKL (137 aa)). An N-linked (GlcNAc...) asparagine glycan is attached at Asn-182. Cys-200 and Cys-231 are disulfide-bonded. Asn-248 and Asn-258 each carry an N-linked (GlcNAc...) asparagine glycan.

It belongs to the tumor necrosis factor family. Homotrimer. Interacts with ARHGAP9, BAIAP2L1, BTK, CACNB3, CACNB4, CRK, DLG2, DNMBP, DOCK4, EPS8L3, FGR, FYB1, FYN, HCK, ITK, ITSN2, KALRN, LYN, MACC1, MIA, MPP4, MYO15A, NCF1, NCK1, NCK2, NCKIPSD, OSTF1, PIK3R1, PSTPIP1, RIMBP3C, SAMSN1, SH3GL3, SH3PXD2B, SH3PXD2A, SH3RF2, SKAP2, SNX33, SNX9, SORBS3, SPTA1, SRC, SRGAP1, SRGAP2, SRGAP3, TEC, TJP3 and YES1. The soluble form derives from the membrane form by proteolytic processing. The membrane-bound form undergoes two successive intramembrane proteolytic cleavages. The first one is processed by ADAM10 producing an N-terminal fragment, which lacks the receptor-binding extracellular domain. This ADAM10-processed FasL (FAsL APL) remnant form is still membrane anchored and further processed by SPPL2A that liberates the FasL intracellular domain (FasL ICD). FasL shedding by ADAM10 is a prerequisite for subsequent intramembrane cleavage by SPPL2A in T-cells. Post-translationally, phosphorylated by FGR on tyrosine residues; this is required for ubiquitination and subsequent internalization. In terms of processing, N-glycosylated. Glycosylation enhances apoptotic activity. Monoubiquitinated. Expressed in T-cells. Expressed in natural killer cells.

It is found in the cell membrane. Its subcellular location is the cytoplasmic vesicle lumen. It localises to the lysosome lumen. The protein resides in the secreted. The protein localises to the nucleus. Cytokine that binds to TNFRSF6/FAS, a receptor that transduces the apoptotic signal into cells. Involved in cytotoxic T-cell-mediated apoptosis, natural killer cell-mediated apoptosis and in T-cell development. Initiates fratricidal/suicidal activation-induced cell death (AICD) in antigen-activated T-cells contributing to the termination of immune responses. TNFRSF6/FAS-mediated apoptosis also has a role in the induction of peripheral tolerance. Binds to TNFRSF6B/DcR3, a decoy receptor that blocks apoptosis. In terms of biological role, induces FAS-mediated activation of NF-kappa-B, initiating non-apoptotic signaling pathways. Can induce apoptosis but does not appear to be essential for this process. Functionally, cytoplasmic form induces gene transcription inhibition. This Mus musculus (Mouse) protein is Tumor necrosis factor ligand superfamily member 6 (Faslg).